Consider the following 484-residue polypeptide: Aspartyl/glutamyl-tRNA(Asn/Gln) amidotransferase subunit B (484 aa).

This sequence belongs to the GatB/GatE family. GatB subfamily. As to quaternary structure, heterotrimer of A, B and C subunits.

It carries out the reaction L-glutamyl-tRNA(Gln) + L-glutamine + ATP + H2O = L-glutaminyl-tRNA(Gln) + L-glutamate + ADP + phosphate + H(+). It catalyses the reaction L-aspartyl-tRNA(Asn) + L-glutamine + ATP + H2O = L-asparaginyl-tRNA(Asn) + L-glutamate + ADP + phosphate + 2 H(+). Allows the formation of correctly charged Asn-tRNA(Asn) or Gln-tRNA(Gln) through the transamidation of misacylated Asp-tRNA(Asn) or Glu-tRNA(Gln) in organisms which lack either or both of asparaginyl-tRNA or glutaminyl-tRNA synthetases. The reaction takes place in the presence of glutamine and ATP through an activated phospho-Asp-tRNA(Asn) or phospho-Glu-tRNA(Gln). The sequence is that of Aspartyl/glutamyl-tRNA(Asn/Gln) amidotransferase subunit B from Bordetella bronchiseptica (strain ATCC BAA-588 / NCTC 13252 / RB50) (Alcaligenes bronchisepticus).